The following is a 987-amino-acid chain: GPMGPSGPRGIPGPPGAPGPQGFQGPPGEPGEPGASGPMGPRGPPGPPGKNGDDGEAGKPGRPGERGPPGPQGARGIPGTAGIPGMKGHRGFSGIDGAKGDAGPAGPKGEPGSPGENGAPGQMGPRGIPGERGRPGPPGPAGARGNDGATGAAGPPGPTGPAGPPGFPGAVGAKGEAGPQGPRGSEGPQGVRGEPGPPGPAGAAGPAGNPGADGQPGAKGANGAPGIAGAPGFPGARGPSGPQGPSGAPGPKGNSGEPGAPGNKGDAGAKGEPGPAGIQGPPGPAGEEGKRGARGEPGPTGIPGPPGERGFPGSDGVAGPKGPVGERGSPGPAGPKGSPGEAGRPGEAGIPGAKGITGSPGSPGPDGKTGPPGPAGQDGRPGPPGPPGARGQAGVMGFPGPKGAAGEPGKAGERGVPGPPGAVGAPGKDGEAGAPGATGPAGPAGERGEQGPAGSPGFQGIPGPAGPPGESGKPGEQGIPGDIGAPGPSGARGERGFPGERGVQGPPGPAGPRGSNGAPGNDGAKGDAGAPGAPGSQGAPGIQGMPGERGAAGIPGPKGDRGDAGPKGADGSPGKDGPRGITGPIGPPGPAGAPGDKGESGPNGPAGPTGARGAPGDRGEPGPPGPAGFAGPPGADGQPGAKGEPGDAGAKGDAGPPGPAGPTGAPGPIGNVGAPGPKGSPGPPGATGFPGAAGRVGPPGPSGNAGPPGPPGPAGKGETGPAGRPGEIGPPGPPGPSGEKGSPGADGPAGAPGTPGPQGIGGQRGVVGIPGQRGFPGIPGPSGEPGKQGPSGPNGERGPPGPMGPPGIAGPPGESGREGSPGAEGSPGRDGSPGPKGDRGETGPAGPPGAPGAPGAPGPVGPAGKSGDRGETGPAGPAGPIGPVGARGPTGPQGPRGDKGETGEQGDRGFSGIQGPPGPPGSPGEQGPSGASGPAGPRGPPGSAGAPGKDGINGIPGPIGPPGPRTGDAGPVGPPGPPGPPGPPGPP.

The tract at residues 1 to 987 (GPMGPSGPRG…PGPPGPPGPP (987 aa)) is disordered. Positions 20 to 39 (PQGFQGPPGEPGEPGASGPM) are enriched in low complexity. Residues 51–65 (NGDDGEAGKPGRPGE) show a composition bias toward basic and acidic residues. Ser-93 carries the post-translational modification Phosphoserine. 2 stretches are compositionally biased toward low complexity: residues 101 to 117 (DAGP…PGEN) and 141 to 153 (AGAR…TGAA). A compositionally biased stretch (pro residues) spans 155–167 (PPGPTGPAGPPGF). Low complexity-rich tracts occupy residues 201-251 (AGAA…APGP), 354-380 (KGIT…QDGR), 389-408 (ARGQ…AGEP), 422-444 (AVGA…AGPA), 516-543 (NGAP…PGIQ), 602-614 (PNGP…ARGA), 627-654 (AGFA…KGDA), 662-677 (PTGA…APGP), 686-696 (ATGFPGAAGRV), and 737-752 (SGEK…AGAP). A compositionally biased stretch (gly residues) spans 756-765 (GPQGIGGQRG). Residues 799-809 (PPGPMGPPGIA) show a composition bias toward pro residues. A compositionally biased stretch (low complexity) spans 811 to 826 (PPGESGREGSPGAEGS). A compositionally biased stretch (pro residues) spans 845-860 (AGPPGAPGAPGAPGPV). Basic and acidic residues predominate over residues 896-907 (RGDKGETGEQGD). Low complexity predominate over residues 923–956 (PGEQGPSGASGPAGPRGPPGSAGAPGKDGINGIP). Positions 972-987 (VGPPGPPGPPGPPGPP) are enriched in pro residues.

It belongs to the fibrillar collagen family. As to quaternary structure, trimers of one alpha 2(I) and two alpha 1(I) chains. In terms of processing, prolines at the third position of the tripeptide repeating unit (G-X-Y) are hydroxylated in some or all of the chains. In terms of tissue distribution, forms the fibrils of tendon, ligaments and bones. In bones, the fibrils are mineralized with calcium hydroxyapatite.

It localises to the secreted. It is found in the extracellular space. The protein localises to the extracellular matrix. Its function is as follows. Type I collagen is a member of group I collagen (fibrillar forming collagen). The chain is Collagen alpha-1(I) chain from Orycteropus afer (Aardvark).